A 149-amino-acid chain; its full sequence is D-aminoacyl-tRNA deacylase (149 aa).

The Gly-cisPro motif, important for rejection of L-amino acids motif lies at 141-142 (GP).

This sequence belongs to the DTD family. In terms of assembly, homodimer.

Its subcellular location is the cytoplasm. The enzyme catalyses glycyl-tRNA(Ala) + H2O = tRNA(Ala) + glycine + H(+). It catalyses the reaction a D-aminoacyl-tRNA + H2O = a tRNA + a D-alpha-amino acid + H(+). In terms of biological role, an aminoacyl-tRNA editing enzyme that deacylates mischarged D-aminoacyl-tRNAs. Also deacylates mischarged glycyl-tRNA(Ala), protecting cells against glycine mischarging by AlaRS. Acts via tRNA-based rather than protein-based catalysis; rejects L-amino acids rather than detecting D-amino acids in the active site. By recycling D-aminoacyl-tRNA to D-amino acids and free tRNA molecules, this enzyme counteracts the toxicity associated with the formation of D-aminoacyl-tRNA entities in vivo and helps enforce protein L-homochirality. The polypeptide is D-aminoacyl-tRNA deacylase (Hydrogenovibrio crunogenus (strain DSM 25203 / XCL-2) (Thiomicrospira crunogena)).